Here is a 325-residue protein sequence, read N- to C-terminus: Glutarate 2-hydroxylase (325 aa).

His-160, Asp-162, and His-292 together coordinate Fe cation.

It belongs to the glutarate hydroxylase family. As to quaternary structure, homotetramer. The cofactor is Fe(2+).

The catalysed reaction is glutarate + 2-oxoglutarate + O2 = (S)-2-hydroxyglutarate + succinate + CO2. The protein operates within amino-acid degradation. Functionally, acts as an alpha-ketoglutarate-dependent dioxygenase catalyzing hydroxylation of glutarate (GA) to L-2-hydroxyglutarate (L2HG). Functions in a L-lysine degradation pathway that proceeds via cadaverine, glutarate and L-2-hydroxyglutarate. This chain is Glutarate 2-hydroxylase, found in Salmonella typhimurium (strain SL1344).